We begin with the raw amino-acid sequence, 504 residues long: Histidine--tRNA ligase (504 aa).

This sequence belongs to the class-II aminoacyl-tRNA synthetase family. In terms of assembly, homodimer.

The protein localises to the cytoplasm. The enzyme catalyses tRNA(His) + L-histidine + ATP = L-histidyl-tRNA(His) + AMP + diphosphate + H(+). In Rhizobium rhizogenes (strain K84 / ATCC BAA-868) (Agrobacterium radiobacter), this protein is Histidine--tRNA ligase.